We begin with the raw amino-acid sequence, 388 residues long: FBD-associated F-box protein At5g60610 (388 aa).

One can recognise an F-box domain in the interval 1-47; that stretch reads MDRISGLPDELLVKIISFVPTKVAVSTSILSKRWESLWKWVPKLECD. Residues 337-388 enclose the FBD domain; the sequence is NWKNIQRSVPKCLKSSLKTLEFAGYTARPEERDFLSFIFKKARCLKTSSISH.

This is FBD-associated F-box protein At5g60610 from Arabidopsis thaliana (Mouse-ear cress).